A 91-amino-acid chain; its full sequence is Thioredoxin (91 aa).

The Thioredoxin domain occupies 2 to 91; that stretch reads SDSIVHVTDD…SRQSEVEATK (90 aa). A disulfide bridge connects residues cysteine 33 and cysteine 36.

It belongs to the thioredoxin family.

Participates in various redox reactions through the reversible oxidation of its active center dithiol to a disulfide and catalyzes dithiol-disulfide exchange reactions. The protein is Thioredoxin (trxA) of Thiocapsa roseopersicina.